Here is a 451-residue protein sequence, read N- to C-terminus: Probable M18 family aminopeptidase 1 (451 aa).

Positions 93, 168, and 426 each coordinate Zn(2+).

This sequence belongs to the peptidase M18 family. Zn(2+) serves as cofactor.

In Thermotoga maritima (strain ATCC 43589 / DSM 3109 / JCM 10099 / NBRC 100826 / MSB8), this protein is Probable M18 family aminopeptidase 1 (apeA).